The primary structure comprises 172 residues: Galectin-related protein (172 aa).

Ala2 carries the post-translational modification N-acetylalanine. A phosphoserine mark is found at Ser22 and Ser25. The 130-residue stretch at 39–168 (PFCGHIKGGM…TIKINGDLQI (130 aa)) folds into the Galectin domain.

Monomer.

In terms of biological role, does not bind lactose, and may not bind carbohydrates. The polypeptide is Galectin-related protein (LGALSL) (Homo sapiens (Human)).